The sequence spans 199 residues: MKVILNEDVKYLGEEGDIKNVAKGYARNYLFPRNLAVPCNEFTLAHFESRKEEIEAKKAAKRQDAAGLKEKLEALSIKILMPAGPNGKLYGAVTTQTLFDELQKLNFDIERKRIEILGQTVKSTGVHKAIVKLYENTSAEISFTVEAQIAEEKPVKASEKKGRRPRRDEEASDEQILAEENSVTEEAVSEEIQNSESEN.

The interval 153 to 199 (KPVKASEKKGRRPRRDEEASDEQILAEENSVTEEAVSEEIQNSESEN) is disordered.

It belongs to the bacterial ribosomal protein bL9 family.

In terms of biological role, binds to the 23S rRNA. In Treponema denticola (strain ATCC 35405 / DSM 14222 / CIP 103919 / JCM 8153 / KCTC 15104), this protein is Large ribosomal subunit protein bL9.